The primary structure comprises 526 residues: Peptide chain release factor 3 (526 aa).

The tr-type G domain occupies 8-277 (NKRRTFAIIS…GLTEWAPKPQ (270 aa)). GTP contacts are provided by residues 17–24 (SHPDAGKT), 85–89 (DTPGH), and 139–142 (NKLD).

This sequence belongs to the TRAFAC class translation factor GTPase superfamily. Classic translation factor GTPase family. PrfC subfamily.

The protein resides in the cytoplasm. Functionally, increases the formation of ribosomal termination complexes and stimulates activities of RF-1 and RF-2. It binds guanine nucleotides and has strong preference for UGA stop codons. It may interact directly with the ribosome. The stimulation of RF-1 and RF-2 is significantly reduced by GTP and GDP, but not by GMP. The polypeptide is Peptide chain release factor 3 (Actinobacillus pleuropneumoniae serotype 3 (strain JL03)).